Here is a 79-residue protein sequence, read N- to C-terminus: Immunity protein CdiI (79 aa).

A run of 2 helical transmembrane segments spans residues 12–32 and 51–71; these read IIFFPMLCTVLGLLGIPIGLI and VVLFTLKIGIPIGFILGLGLW.

In terms of assembly, probably interacts with cognate toxin CdiA.

It localises to the cell inner membrane. Functionally, immunity protein component of a toxin-immunity protein module, which functions as a cellular contact-dependent growth inhibition (CDI) system. CDI modules allow bacteria to communicate with and inhibit the growth of closely related neighboring bacteria in a contact-dependent fashion. Protects cells against CdiA from the same strain, its cognate toxin protein. Growth inhibition is reversible upon induction of this protein, occurring about 2.5 hours after induction, and requires an energy source. Does not protect against non-cognate CdiA from E.coli strain 563 / UPEC, D.dadantii strain 3937 or Y.pestis strain CO92. The sequence is that of Immunity protein CdiI from Escherichia coli.